Consider the following 528-residue polypeptide: Cytochrome b5 reductase 4 (528 aa).

Methionine 1 bears the N-acetylmethionine mark. The tract at residues 1 to 29 (MLNVPSQAFPAPGSQQRVSSQGRSKVPLK) is disordered. A compositionally biased stretch (low complexity) spans 13 to 24 (GSQQRVSSQGRS). In terms of domain architecture, Cytochrome b5 heme-binding spans 54–130 (LIEVTEEELK…LKECLVGRMA (77 aa)). Heme contacts are provided by histidine 89 and histidine 112. Residues 172–263 (LSSPSYDWFQ…KESVSWQCLG (92 aa)) enclose the CS domain. The FAD-binding FR-type domain maps to 280 to 392 (LYYRRCQLIS…SGPEGDFKVS (113 aa)). Residues 372 to 387 (DRLQ…GPEG) and 399 to 431 (DLFL…KVKL) contribute to the FAD site.

This sequence belongs to the flavoprotein pyridine nucleotide cytochrome reductase family. FAD is required as a cofactor. As to expression, ubiquitously expressed. Isoform 2 is expressed in testis, brain, skeletal muscle and in the male germline.

The protein resides in the endoplasmic reticulum. It carries out the reaction 2 Fe(III)-[cytochrome b5] + NADH = 2 Fe(II)-[cytochrome b5] + NAD(+) + H(+). Functionally, NADH-cytochrome b5 reductase involved in endoplasmic reticulum stress response pathway. Plays a critical role in protecting pancreatic beta-cells against oxidant stress, possibly by protecting the cell from excess buildup of reactive oxygen species (ROS). This is Cytochrome b5 reductase 4 (Cyb5r4) from Mus musculus (Mouse).